We begin with the raw amino-acid sequence, 278 residues long: D-arabinitol 2-dehydrogenase [ribulose-forming] (278 aa).

The NADP(+) site is built by leucine 28 and asparagine 49. Serine 166 functions as the Proton donor in the catalytic mechanism. Positions 181, 185, 214, and 216 each coordinate NADP(+). Tyrosine 181 functions as the Proton acceptor in the catalytic mechanism. Lysine 185 serves as the catalytic Lowers pKa of active site Tyr.

It belongs to the short-chain dehydrogenases/reductases (SDR) family.

The catalysed reaction is D-arabinitol + NAD(+) = D-ribulose + NADH + H(+). The protein operates within carbohydrate metabolism; D-arabinitol metabolism. In Scheffersomyces stipitis (strain ATCC 58785 / CBS 6054 / NBRC 10063 / NRRL Y-11545) (Yeast), this protein is D-arabinitol 2-dehydrogenase [ribulose-forming] (ARDH).